Reading from the N-terminus, the 71-residue chain is Small ribosomal subunit protein bS21 (71 aa).

It belongs to the bacterial ribosomal protein bS21 family.

The chain is Small ribosomal subunit protein bS21 from Thioalkalivibrio sulfidiphilus (strain HL-EbGR7).